We begin with the raw amino-acid sequence, 150 residues long: Ribosome maturation factor RimP (150 aa).

This sequence belongs to the RimP family.

The protein resides in the cytoplasm. Functionally, required for maturation of 30S ribosomal subunits. This is Ribosome maturation factor RimP from Francisella tularensis subsp. mediasiatica (strain FSC147).